We begin with the raw amino-acid sequence, 370 residues long: tRNA-specific 2-thiouridylase MnmA (370 aa).

Residues 12-19 and leucine 38 contribute to the ATP site; that span reads GMSGGVDS. Cysteine 105 functions as the Nucleophile in the catalytic mechanism. Cysteine 105 and cysteine 204 are joined by a disulfide. Glycine 129 contacts ATP. Residues 153-155 form an interaction with tRNA region; that stretch reads KDQ. Cysteine 204 functions as the Cysteine persulfide intermediate in the catalytic mechanism. An interaction with tRNA region spans residues 310-311; sequence RY.

It belongs to the MnmA/TRMU family.

The protein resides in the cytoplasm. It carries out the reaction S-sulfanyl-L-cysteinyl-[protein] + uridine(34) in tRNA + AH2 + ATP = 2-thiouridine(34) in tRNA + L-cysteinyl-[protein] + A + AMP + diphosphate + H(+). Functionally, catalyzes the 2-thiolation of uridine at the wobble position (U34) of tRNA, leading to the formation of s(2)U34. In Desulfitobacterium hafniense (strain Y51), this protein is tRNA-specific 2-thiouridylase MnmA.